Consider the following 253-residue polypeptide: Imidazole glycerol phosphate synthase subunit HisF (253 aa).

Active-site residues include D11 and D130.

It belongs to the HisA/HisF family. As to quaternary structure, heterodimer of HisH and HisF.

The protein resides in the cytoplasm. The catalysed reaction is 5-[(5-phospho-1-deoxy-D-ribulos-1-ylimino)methylamino]-1-(5-phospho-beta-D-ribosyl)imidazole-4-carboxamide + L-glutamine = D-erythro-1-(imidazol-4-yl)glycerol 3-phosphate + 5-amino-1-(5-phospho-beta-D-ribosyl)imidazole-4-carboxamide + L-glutamate + H(+). It functions in the pathway amino-acid biosynthesis; L-histidine biosynthesis; L-histidine from 5-phospho-alpha-D-ribose 1-diphosphate: step 5/9. Its function is as follows. IGPS catalyzes the conversion of PRFAR and glutamine to IGP, AICAR and glutamate. The HisF subunit catalyzes the cyclization activity that produces IGP and AICAR from PRFAR using the ammonia provided by the HisH subunit. This is Imidazole glycerol phosphate synthase subunit HisF from Lysinibacillus sphaericus (strain C3-41).